The primary structure comprises 121 residues: Small ribosomal subunit protein uS13 (121 aa).

Residues 94-121 are disordered; the sequence is GLPLRGQRTRTNARTRKGPRRAAQSLKK.

This sequence belongs to the universal ribosomal protein uS13 family. As to quaternary structure, part of the 30S ribosomal subunit. Forms a loose heterodimer with protein S19. Forms two bridges to the 50S subunit in the 70S ribosome.

Functionally, located at the top of the head of the 30S subunit, it contacts several helices of the 16S rRNA. In the 70S ribosome it contacts the 23S rRNA (bridge B1a) and protein L5 of the 50S subunit (bridge B1b), connecting the 2 subunits; these bridges are implicated in subunit movement. Contacts the tRNAs in the A and P-sites. This Paraburkholderia phymatum (strain DSM 17167 / CIP 108236 / LMG 21445 / STM815) (Burkholderia phymatum) protein is Small ribosomal subunit protein uS13.